The following is a 181-amino-acid chain: ATP synthase subunit delta (181 aa).

This sequence belongs to the ATPase delta chain family. As to quaternary structure, F-type ATPases have 2 components, F(1) - the catalytic core - and F(0) - the membrane proton channel. F(1) has five subunits: alpha(3), beta(3), gamma(1), delta(1), epsilon(1). F(0) has three main subunits: a(1), b(2) and c(10-14). The alpha and beta chains form an alternating ring which encloses part of the gamma chain. F(1) is attached to F(0) by a central stalk formed by the gamma and epsilon chains, while a peripheral stalk is formed by the delta and b chains.

The protein localises to the cell membrane. Its function is as follows. F(1)F(0) ATP synthase produces ATP from ADP in the presence of a proton or sodium gradient. F-type ATPases consist of two structural domains, F(1) containing the extramembraneous catalytic core and F(0) containing the membrane proton channel, linked together by a central stalk and a peripheral stalk. During catalysis, ATP synthesis in the catalytic domain of F(1) is coupled via a rotary mechanism of the central stalk subunits to proton translocation. In terms of biological role, this protein is part of the stalk that links CF(0) to CF(1). It either transmits conformational changes from CF(0) to CF(1) or is implicated in proton conduction. This Bacillus pumilus (strain SAFR-032) protein is ATP synthase subunit delta.